The primary structure comprises 260 residues: Putative ATP-binding protein BruAb2_1123 (260 aa).

Residues 5–228 form the ABC transporter domain; that stretch reads ISFNNVVMRY…DLPYPRTEAI (224 aa). 37–44 serves as a coordination point for ATP; the sequence is GPSGCGKS.

This sequence belongs to the ABC transporter superfamily. The complex is composed of two ATP-binding proteins (BruAb2_1123), two transmembrane proteins (BruAb2_1124) and a solute-binding protein (BruAb2_1122).

The protein localises to the cell inner membrane. Its function is as follows. Probably part of an ABC transporter complex. Probably Responsible for energy coupling to the transport system. The polypeptide is Putative ATP-binding protein BruAb2_1123 (Brucella abortus biovar 1 (strain 9-941)).